Reading from the N-terminus, the 54-residue chain is UPF0181 protein PM0480 (54 aa).

The protein belongs to the UPF0181 family.

This is UPF0181 protein PM0480 from Pasteurella multocida (strain Pm70).